The following is a 458-amino-acid chain: MEFDTIAAISTALGEGAIAIVRVSGDDAVEKVNRIFKGKDLTEVPSHTIHYGHIVDLDTNQVIEEVMVSIMRAPRTFTRENIVEINCHGGLVSVNKVLQLILAQGVRLAEPGEFTKRAFLNGRIDLSQAEAVMDLIRAKTDRAMNVAINQMEGRLSKLIGRLRQDILETLAHVEVNIDYPEYDDVEEMTHNILIEKATHVRAEIAKILETSKQGKILREGIATAIIGRPNVGKSSLLNSLVQEKKAIVTDIAGTTRDVIEEYVNVRGVPLKLIDTAGIRETEDVVERIGVERSKEMMSQADLVLVVVNYSEALTNEDEDLFRAVQGKDFIVIVNKTDLPQAIDMERVIELAAGNRIITTSLIEEQGIDELETAIADLFFEGTIDSADVTYVSNARHIGLLTQAGKTIGDAIEAIENGVPIDMVQIDLTRTWEILGEITGDTVHESLIDQLFSQFCLGK.

(6S)-5-formyl-5,6,7,8-tetrahydrofolate contacts are provided by Arg-22, Glu-84, and Arg-123. Positions 220-379 (GIATAIIGRP…LETAIADLFF (160 aa)) constitute a TrmE-type G domain. Asn-230 provides a ligand contact to K(+). GTP is bound by residues 230–235 (NVGKSS), 249–255 (TDIAGTT), and 274–277 (DTAG). Ser-234 lines the Mg(2+) pocket. Thr-249, Ile-251, and Thr-254 together coordinate K(+). Thr-255 is a Mg(2+) binding site. Position 458 (Lys-458) interacts with (6S)-5-formyl-5,6,7,8-tetrahydrofolate.

This sequence belongs to the TRAFAC class TrmE-Era-EngA-EngB-Septin-like GTPase superfamily. TrmE GTPase family. Homodimer. Heterotetramer of two MnmE and two MnmG subunits. The cofactor is K(+).

The protein resides in the cytoplasm. Functionally, exhibits a very high intrinsic GTPase hydrolysis rate. Involved in the addition of a carboxymethylaminomethyl (cmnm) group at the wobble position (U34) of certain tRNAs, forming tRNA-cmnm(5)s(2)U34. The sequence is that of tRNA modification GTPase MnmE from Bacillus cereus (strain ATCC 10987 / NRS 248).